We begin with the raw amino-acid sequence, 444 residues long: Type VII secretion system protein EssB (444 aa).

Topologically, residues methionine 1–tryptophan 229 are cytoplasmic. The chain crosses the membrane as a helical span at residues valine 230 to phenylalanine 250. The Extracellular portion of the chain corresponds to serine 251 to lysine 444. Residues lysine 366–lysine 444 are disordered. Residues serine 372 to lysine 444 show a composition bias toward basic and acidic residues. A coiled-coil region spans residues leucine 387–lysine 443.

This sequence belongs to the EssB family. As to quaternary structure, may oligomerize and interact with other membrane components to form the Ess system. Interacts with EsaA.

The protein localises to the cell membrane. Functionally, component of the type VII secretion system (Ess). Required for the secretion of EsxA and proper accumulation of EssB and EssD. This Staphylococcus aureus (strain USA300) protein is Type VII secretion system protein EssB.